The chain runs to 248 residues: Coproheme decarboxylase (248 aa).

Fe-coproporphyrin III-binding positions include Arg-130, 144–148 (YPMDK), His-171, Gln-184, and Ser-222. Residue Tyr-144 is part of the active site.

It belongs to the ChdC family. Type 1 subfamily. Fe-coproporphyrin III is required as a cofactor.

The catalysed reaction is Fe-coproporphyrin III + 2 H2O2 + 2 H(+) = heme b + 2 CO2 + 4 H2O. It catalyses the reaction Fe-coproporphyrin III + H2O2 + H(+) = harderoheme III + CO2 + 2 H2O. It carries out the reaction harderoheme III + H2O2 + H(+) = heme b + CO2 + 2 H2O. The protein operates within porphyrin-containing compound metabolism; protoheme biosynthesis. Its function is as follows. Involved in coproporphyrin-dependent heme b biosynthesis. Catalyzes the decarboxylation of Fe-coproporphyrin III (coproheme) to heme b (protoheme IX), the last step of the pathway. The reaction occurs in a stepwise manner with a three-propionate intermediate. The sequence is that of Coproheme decarboxylase from Geobacillus thermodenitrificans (strain NG80-2).